The following is a 24-amino-acid chain: Tryptophanase operon leader peptide (24 aa).

This Escherichia coli O157:H7 protein is Tryptophanase operon leader peptide (tnaL).